Here is an 89-residue protein sequence, read N- to C-terminus: Cornifin-B (89 aa).

The disordered stretch occupies residues 1-29; it reads MSSQQQKQPCTPPPQLQQQQVKQPCQPPP. A run of 8 repeats spans residues 3-14, 18-29, 31-38, 39-46, 47-54, 55-62, 63-70, and 71-78. The 2 X 12 AA approximate repeats stretch occupies residues 3 to 29; that stretch reads SQQQKQPCTPPPQLQQQQVKQPCQPPP. A 6 X 8 AA approximate tandem repeats region spans residues 31-78; the sequence is EPCIPKTKEPCHPKVPEPCHPKVPEPCQPKVPEPCHPKVPEPCPSIVT.

This sequence belongs to the cornifin (SPRR) family. In terms of processing, the N-terminus is blocked. As to expression, suprabasal layers of squamous-differentiated tissues such as epidermis, esophagus, tongue and trachea.

Its subcellular location is the cytoplasm. In terms of biological role, cross-linked envelope protein of keratinocytes. It is a keratinocyte protein that first appears in the cell cytosol, but ultimately becomes cross-linked to membrane proteins by transglutaminase. All that results in the formation of an insoluble envelope beneath the plasma membrane. Can function as both amine donor and acceptor in transglutaminase-mediated cross-linkage. The polypeptide is Cornifin-B (SPRR1B) (Homo sapiens (Human)).